A 544-amino-acid polypeptide reads, in one-letter code: Zinc finger and BTB domain-containing protein 7B (544 aa).

The BTB domain maps to cysteine 34 to serine 115. Position 150 is a phosphoserine (serine 150). Disordered stretches follow at residues threonine 171–asparagine 221 and glycine 244–isoleucine 314. A compositionally biased stretch (pro residues) spans proline 186–proline 200. Residues valine 201–lysine 210 are compositionally biased toward basic residues. An N6-acetyllysine; by EP300; alternate mark is found at lysine 210 and lysine 216. Residues lysine 210 and lysine 216 each participate in a glycyl lysine isopeptide (Lys-Gly) (interchain with G-Cter in ubiquitin); alternate cross-link. A compositionally biased stretch (acidic residues) spans phenylalanine 277–methionine 286. At lysine 339 the chain carries N6-acetyllysine; by EP300; alternate. Lysine 339 participates in a covalent cross-link: Glycyl lysine isopeptide (Lys-Gly) (interchain with G-Cter in ubiquitin); alternate. A required for interaction with and acetylation by EP300 region spans residues methionine 348 to arginine 404. The C2H2-type 1 zinc-finger motif lies at glutamine 350–histidine 372. A Phosphothreonine modification is found at threonine 373. C2H2-type zinc fingers lie at residues phenylalanine 378–histidine 400 and tyrosine 406–histidine 428. A C2H2-type 4; atypical zinc finger spans residues tyrosine 434 to cysteine 458. 2 disordered regions span residues arginine 465–asparagine 493 and tryptophan 507–serine 544. 2 stretches are compositionally biased toward low complexity: residues alanine 511–proline 522 and threonine 531–serine 544.

Homodimerizes. Interacts with NCL, NEDD4 and YBX1. Interacts with HNRNPU (via RNA-binding RGG-box region); the interaction facilitates the recruitment of long non-coding RNA Blnc1 by ZBTB7B. Interacts with HDAC4 and HDAC5; the interaction allows the recruitment of HDAC4 and HDAC5 on CD8 loci for deacetylation and possible inhibition of CD8 genes expression. Acetylated directly and specifically by EP300. EP300-mediated acetylation of Lys-210, Lys-216 and Lys-339 stabilizes the protein by antagonizing ubiquitin conjugation. In terms of processing, ubiquitinated, leading to proteasomal degradation. Competes with acetylation on Lys-210, Lys-216 and Lys-339. As to expression, widely expressed, with a higher level in skin. Expressed in thymus. Restricted to CD4 cells (mature single positive CD4(+) and intermediate CD4(+)CD8(+) cells). Expressed in the luminal epithelial cells in the mammary glands where is up-regulated at late pregnancy and lactation. Expression is enriched in brown fat.

The protein resides in the nucleus. Functionally, transcription regulator that acts as a key regulator of lineage commitment of immature T-cell precursors. Exerts distinct biological functions in the mammary epithelial cells and T cells in a tissue-specific manner. Necessary and sufficient for commitment of CD4 lineage, while its absence causes CD8 commitment. Development of immature T-cell precursors (thymocytes) to either the CD4 helper or CD8 killer T-cell lineages correlates precisely with their T-cell receptor specificity for major histocompatibility complex class II or class I molecules, respectively. Cross-antagonism between ZBTB7B and CBF complexes are determinative to CD4 versus CD8 cell fate decision. Suppresses RUNX3 expression and imposes CD4+ lineage fate by inducing the SOCS suppressors of cytokine signaling. induces, as a transcriptional activator, SOCS genes expression which represses RUNX3 expression and promotes the CD4+ lineage fate. During CD4 lineage commitment, associates with multiple sites at the CD8 locus, acting as a negative regulator of the CD8 promoter and enhancers by epigenetic silencing through the recruitment of class II histone deacetylases, such as HDAC4 and HDAC5, to these loci. Regulates the development of IL17-producing CD1d-restricted naural killer (NK) T cells. Also functions as an important metabolic regulator in the lactating mammary glands. Critical feed-forward regulator of insulin signaling in mammary gland lactation, directly regulates expression of insulin receptor substrate-1 (IRS-1) and insulin-induced Akt-mTOR-SREBP signaling. Transcriptional repressor of the collagen COL1A1 and COL1A2 genes. May also function as a repressor of fibronectin and possibly other extracellular matrix genes. Potent driver of brown fat development, thermogenesis and cold-induced beige fat formation. Recruits the brown fat lncRNA 1 (Blnc1):HNRNPU ribonucleoprotein complex to activate thermogenic gene expression in brown and beige adipocytes. This is Zinc finger and BTB domain-containing protein 7B from Mus musculus (Mouse).